The primary structure comprises 116 residues: uncharacterized protein (116 aa).

The helical transmembrane segment at leucine 22–valine 42 threads the bilayer.

It localises to the membrane. This is an uncharacterized protein from Saccharomyces cerevisiae (strain ATCC 204508 / S288c) (Baker's yeast).